An 831-amino-acid chain; its full sequence is Sodium/hydrogen exchanger 3 (831 aa).

A signal peptide spans 1–28; it reads MWHPALGPGWKPLLALALALTSLRGVRG. Over 29–48 the chain is Extracellular; it reads IEEEPNSGGSFQIVTFKWHH. Residues 49 to 71 form a helical membrane-spanning segment; that stretch reads VQDPYIIALWILVASLAKIVFHL. The Cytoplasmic portion of the chain corresponds to 72-79; it reads SHKVTSVV. The helical transmembrane segment at 80–99 threads the bilayer; that stretch reads PESALLIVLGLVLGGIVWAA. At 100–108 the chain is on the extracellular side; sequence DHIASFTLT. A helical membrane pass occupies residues 109–126; sequence PTLFFFYLLPPIVLDAGY. The Cytoplasmic segment spans residues 127–129; it reads FMP. Residues 130–165 traverse the membrane as a helical segment; that stretch reads NRLFFGNLGTILLYAVIGTIWNAATTGLSLYGVFLS. Residues Gly135, Gly138, and Thr139 each contribute to the a 1,2-diacyl-sn-glycero-3-phospho-(1D-myo-inositol) site. Residues 166–178 are Extracellular-facing; the sequence is GLMGELKIGLLDF. Residues 179 to 200 form a helical membrane-spanning segment; the sequence is LLFGSLIAAVDPVAVLAVFEEV. The Cytoplasmic segment spans residues 201 to 202; it reads HV. Residues 203-234 form a helical membrane-spanning segment; that stretch reads NEVLFIIVFGESLLNDAVTVVLYNVFESFVTL. Topologically, residues 235 to 241 are extracellular; the sequence is GGDAVTG. Residues 242–276 form a helical membrane-spanning segment; sequence VDCVKGIVSFFVVSLGGTLVGVIFAFLLSLVTRFT. The Cytoplasmic segment spans residues 277-278; it reads KH. A helical membrane pass occupies residues 279-301; that stretch reads VRIIEPGFVFVISYLSYLTSEML. Residues 302–303 are Extracellular-facing; that stretch reads SL. A helical transmembrane segment spans residues 304-320; that stretch reads SAILAITFCGICCQKYV. Topologically, residues 321–327 are cytoplasmic; that stretch reads KANISEQ. The chain crosses the membrane as a helical span at residues 328 to 356; the sequence is SATTVRYTMKMLASGAETIIFMFLGISAV. Residues 357–364 are Extracellular-facing; sequence DPVIWTWN. The helical transmembrane segment at 365–386 threads the bilayer; it reads TAFVLLTLVFISVYRAIGVVLQ. Residues 387-399 lie on the Cytoplasmic side of the membrane; that stretch reads TWILNRYRMVQLE. Met395 contributes to the a 1,2-diacyl-sn-glycero-3-phospho-(1D-myo-inositol) binding site. Residues 400–423 traverse the membrane as a helical segment; that stretch reads TIDQVVMSYGGLRGAVAYALVVLL. The Extracellular segment spans residues 424–430; that stretch reads DEKKVKE. The helical transmembrane segment at 431–464 threads the bilayer; it reads KNLFVSTTLIVVFFTVIFQGLTIKPLVQWLKVKR. At 465-831 the chain is on the cytoplasmic side; sequence SEQREPKLNE…QPASPESTHM (367 aa). A 1,2-diacyl-sn-glycero-3-phospho-(1D-myo-inositol) contacts are provided by Gln494, Ile495, and His497. Residues Ser552 and Ser560 each carry the phosphoserine modification. The tract at residues 573–587 is interaction with EZR; that stretch reads RPSTVEASVSYFLRE. The interaction with NHERF4 stretch occupies residues 588–665; the sequence is NVSAVCLDMQ…RKRLESFKSA (78 aa). Residues 589 to 693 are interaction with AHCYL1; sequence VSAVCLDMQS…AQKRRNSSIP (105 aa). Residues Ser590 and Ser605 each carry the phosphoserine modification. Position 661 is a phosphoserine; by SGK1 (Ser661). 3 positions are modified to phosphoserine: Ser716, Ser807, and Ser810. The disordered stretch occupies residues 808-831; sequence VDSFLQADGPEEQLQPASPESTHM. Positions 822-831 are enriched in polar residues; that stretch reads QPASPESTHM.

It belongs to the monovalent cation:p,roton antiporter 1 (CPA1) transporter (TC 2.A.36) family. In terms of assembly, homodimer. Found in the forms of complex and dynamic macromolecular complexes. Binds NHERF1 and NHERF2. Interacts with NHERF4 and interactions decrease in response to elevated calcium ion levels. Interacts with PDZK1 (via C-terminal PDZ domain). Interacts with CHP1; this interaction increases trafficking and activity at the plasma membrane of SLC9A3. Interacts with CHP2 and SHANK2. Interacts with AHCYL1; the interaction is required for SLC9A3 activity. Interacts with EZR; interaction targets SLC9A3 to the apical membrane. Interacts with SNX27 (via PDZ domains); directs SLC9A3 membrane insertion from early endosomes to the plasma membrane. Post-translationally, phosphorylated by PRKACA at Ser-552 and Ser-605, which inhibits activity. Phosphorylation of Ser-605 is essential for cAMP-mediated inhibition of SLC9A3. Phosphorylation at Ser-661 by SGK1 is associated with increased abundance at the cell membrane. Phosphorylation at Ser-716 by CSNK2A1 regulates SLC9A3 activity through the formation of multiple signaling complexes. Most abundant in colon and small intestine, followed by kidney and stomach. In kidney, expressed in proximal tubules and outer medulla (at protein level).

It is found in the apical cell membrane. The protein localises to the cell membrane. It localises to the recycling endosome membrane. Its subcellular location is the early endosome membrane. The enzyme catalyses Na(+)(in) + H(+)(out) = Na(+)(out) + H(+)(in). With respect to regulation, seems to switch between active and inactive modes in response to various stimuli. Activated directly or indirectly by membrane phosphatidylinositol (PIs). Regulated by a variety of auxiliary proteins, which facilitate the maturation, cell surface expression and function of the transporter. Inhibited specifically by the drug tenapanor. Functionally, plasma membrane Na(+)/H(+) antiporter. Exchanges intracellular H(+) ions for extracellular Na(+) in 1:1 stoichiometry, playing a key role in salt and fluid absorption and pH homeostasis. Major apical Na(+)/H(+) exchanger in kidney and intestine playing an important role in renal and intestine Na(+) absorption and blood pressure regulation. In Rattus norvegicus (Rat), this protein is Sodium/hydrogen exchanger 3 (Slc9a3).